Consider the following 271-residue polypeptide: Phthiotriol/phenolphthiotriol dimycocerosates methyltransferase 1 (271 aa).

Belongs to the methyltransferase superfamily. Phthiotriol/phenolphthiotriol dimycocerosates methyltransferase family.

Functionally, catalyzes the methylation of the lipid moiety of the intermediate compounds phthiotriol and glycosylated phenolphthiotriol dimycoserosates to form phthiocerol dimycocerosates (DIM A) and glycosylated phenolphthiocerol dimycocerosates (PGL). This Mycobacterium ulcerans (strain Agy99) protein is Phthiotriol/phenolphthiotriol dimycocerosates methyltransferase 1.